The sequence spans 282 residues: Cell division protein FtsQ (282 aa).

Residues 1 to 30 (MINIGPPKKRRLRRKGNRFKKTRRVIPWRR) lie on the Cytoplasmic side of the membrane. Residues 31–51 (LMIGALWGTMALASLGMVVAV) traverse the membrane as a helical segment. Over 52–282 (ACFAGQMLFA…LDAGELRGKG (231 aa)) the chain is Periplasmic. Positions 65 to 133 (FKVERIQVEN…DQLVIRVDER (69 aa)) constitute a POTRA domain.

This sequence belongs to the FtsQ/DivIB family. FtsQ subfamily.

The protein localises to the cell inner membrane. Essential cell division protein. This chain is Cell division protein FtsQ, found in Syntrophotalea carbinolica (strain DSM 2380 / NBRC 103641 / GraBd1) (Pelobacter carbinolicus).